We begin with the raw amino-acid sequence, 144 residues long: Large ribosomal subunit protein uL15 (144 aa).

The segment at 1-53 is disordered; it reads MRLNTLSPAEGAKHSAKRLGRGIGSGLGKTGGRGHKGQKSRTGGGVRRGFEGG. Gly residues predominate over residues 21–31; that stretch reads RGIGSGLGKTG.

Belongs to the universal ribosomal protein uL15 family. Part of the 50S ribosomal subunit.

Its function is as follows. Binds to the 23S rRNA. The protein is Large ribosomal subunit protein uL15 of Haemophilus influenzae (strain ATCC 51907 / DSM 11121 / KW20 / Rd).